A 540-amino-acid polypeptide reads, in one-letter code: MLVMQLLLPFLASTAAAAAAIDSTSSSNGSDHHGSSFQAECESFKAKINVTNANVHSVTYVPAGVNISMADNPSICGGDEDPITSTFAFCRIALNVTTSSKSQIFMEAWLPSNYSGRFLSTGNGGLGGCVKYDDMAYAAGYGFATVGTNNGHFGNNGVSFYQNTEVVEDFAYRALHTGVVVGKELTKNFYPQGYNKSYYLGCSTGGRQGWKSVQTFPDDFDGVVAGAPAFNFINLTSWGARFLTLTGDSSAETFVTETQWTAVHNEIIRQCDSLDGAKDGIIEDPDLCQPIIEALLCNATQSSTSGTCLTGAQVKTVNGVFSATYGLNGSFLYPRMQPGSELAAYSSYYSGTPFAYAEDWYRYVVFNNTNWDVATWTVQDAAIANAQDPYQISTWNGDLSPFQKKGGKVLHYHGMEDAIISSESSKVYYKHVADTMNLSPSELDSFYRFFPISGMAHCANADGPSAIGQGTGTFAGNNPQDNVLLAMVQWVEEGVAPDFVRGAKLNGSTVEYRRKHCKYPKRNRYVGPGSYTDENAWECV.

Residues 1-18 (MLVMQLLLPFLASTAAAA) form the signal peptide. N28, N49, N66, N95, N113, and N195 each carry an N-linked (GlcNAc...) asparagine glycan. 2 disulfide bridges follow: C41–C90 and C76–C129. Disulfide bonds link C202–C458, C271–C288, and C297–C308. The active-site Acyl-ester intermediate is S203. N-linked (GlcNAc...) asparagine glycosylation occurs at N234. The Ca(2+) site is built by D272, D275, A277, D279, and I281. Residues N298, N328, and N367 are each glycosylated (N-linked (GlcNAc...) asparagine). Catalysis depends on charge relay system residues D417 and H457. Residue N506 is glycosylated (N-linked (GlcNAc...) asparagine). Residues C517 and C539 are joined by a disulfide bond.

The protein belongs to the tannase family. As to quaternary structure, homodimer.

The protein resides in the secreted. It carries out the reaction feruloyl-polysaccharide + H2O = ferulate + polysaccharide.. Functionally, involved in degradation of plant cell walls. Hydrolyzes the feruloyl-arabinose ester bond in arabinoxylans as well as the feruloyl-galactose and feruloyl-arabinose ester bonds in pectin. The polypeptide is Probable feruloyl esterase B-1 (faeB-1) (Aspergillus oryzae (strain ATCC 42149 / RIB 40) (Yellow koji mold)).